The chain runs to 348 residues: Phospho-2-dehydro-3-deoxyheptonate aldolase, Trp-sensitive (348 aa).

This sequence belongs to the class-I DAHP synthase family.

The enzyme catalyses D-erythrose 4-phosphate + phosphoenolpyruvate + H2O = 7-phospho-2-dehydro-3-deoxy-D-arabino-heptonate + phosphate. The protein operates within metabolic intermediate biosynthesis; chorismate biosynthesis; chorismate from D-erythrose 4-phosphate and phosphoenolpyruvate: step 1/7. Functionally, stereospecific condensation of phosphoenolpyruvate (PEP) and D-erythrose-4-phosphate (E4P) giving rise to 3-deoxy-D-arabino-heptulosonate-7-phosphate (DAHP). This is Phospho-2-dehydro-3-deoxyheptonate aldolase, Trp-sensitive (aroH) from Escherichia coli O157:H7.